Consider the following 341-residue polypeptide: 33 kDa chaperonin (341 aa).

Cystine bridges form between Cys245–Cys247 and Cys278–Cys281.

It belongs to the HSP33 family. In terms of processing, under oxidizing conditions two disulfide bonds are formed involving the reactive cysteines. Under reducing conditions zinc is bound to the reactive cysteines and the protein is inactive.

It is found in the cytoplasm. Redox regulated molecular chaperone. Protects both thermally unfolding and oxidatively damaged proteins from irreversible aggregation. Plays an important role in the bacterial defense system toward oxidative stress. The chain is 33 kDa chaperonin from Thermus thermophilus (strain ATCC BAA-163 / DSM 7039 / HB27).